The chain runs to 396 residues: MLSCYRNCKHFGVCGGCSSPQMEYASSLKTKELALHNLFAPLIPSQNILPVIPCSPLLRGRNKMEFSFYQTVDGEKTLGFISPSKPKKGIPITECLMIDERAMDILNITRSWWTAHPDLSAYYPPLNKGSLCTITVRVGNISNDFMIILTTSGREEFAVPLNIIQEWQQSLLDSGLPITSIFWEEKLSARNSPTTFRTTHLYGAPFLKQQLSIDGRSSLFHIRPRSFFQPQSLQAEKIIQTIKEFIDPCGEETLLDLYCGAGIIGILLAPYVKKIIGVELVPDAVASAQENIQLNSVDMEVFLEDAKQFCKRNENLPSPDIVVIDPPRCGMQNRALKYLLRMAPKKIVYVSCNPLTQIQECSVLVEQGYQLRRMQPIDQFPHTNHLENIVLLERLS.

Residues C8, C14, C17, and C95 each contribute to the [4Fe-4S] cluster site. S-adenosyl-L-methionine-binding residues include Q229, Y258, E279, and D325. C352 functions as the Nucleophile in the catalytic mechanism.

Belongs to the class I-like SAM-binding methyltransferase superfamily. RNA M5U methyltransferase family.

This is an uncharacterized protein from Chlamydia trachomatis serovar D (strain ATCC VR-885 / DSM 19411 / UW-3/Cx).